A 315-amino-acid chain; its full sequence is MAFPEPKPRAPELPQKRMKTLDCSQGAVRAVRFNVDGNYCLTCGSDKTLKLWNPLRGTLLRTYSGHGYEVLDAAGSFDNSHLCSGGGDKTVVLWDVATGQVVRKFRGHAGKVNTVQFNEEATVILSGSIDSSVRCWDCRSRKPEPVQTLDEARDGISSVKVSDHEILAGSVDGRVRRYDLRMGQVSSDYVGSPITCTCFSRDGQCTLISSLDSTLRLLDKDTGELLGEYVGHKNQQYKLDCCLSERDTHVVSCSEDGKVFFWDLVEGALALALPVGSNVVQSLAYHPTEPCLLTAMGGSIQYWREETYEAEGGAG.

WD repeat units follow at residues 23-62 (CSQG…LLRT), 65-104 (GHGY…VVRK), 107-146 (GHAG…PEPV), 151-188 (EARD…VSSD), 190-228 (VGSP…LLGE), 231-272 (GHKN…LALA), and 275-313 (VGSN…AEGG).

Belongs to the WD repeat MORG1 family. Interacts with EGLN3/PHD3. Interacts with ERK signaling proteins MAP2K1/MEK1, MAP2K2/MEK2, LAMTOR3, ARAF/Raf-1, MAPK1/ERK2 and MAPK3/ERK1. Identified in the spliceosome C complex. Interacts with PARD6B and CRB3. Interacts strongly with GTP-bound RRAGA but not with inactive GDP-bound. Interacts with p62/SQSTM1. As to expression, ubiquitous.

The protein resides in the cytoplasm. Its subcellular location is the lysosome. The protein localises to the nucleus. Molecular scaffold protein for various multimeric protein complexes. Acts as a module in the assembly of a multicomponent scaffold for the ERK pathway, linking ERK responses to specific agonists. At low concentrations it enhances ERK activation, whereas high concentrations lead to the inhibition of ERK activation. Also involved in response to hypoxia by acting as a negative regulator of HIF1A/HIF-1-alpha via its interaction with EGLN3/PHD3. May promote degradation of HIF1A. May act by recruiting signaling complexes to a specific upstream activator. May also be involved in pre-mRNA splicing. Participates in tight junction development by regulating apico-basal polarity, a key step in tissue development and organization. Mechanistically, regulates the translocation of PAR6-aPKC from the cytoplasm to the apical surface by acting as an adapter between PARD6B AND CRB3. Also acts as a negative regulator of mTORC1 under nutrient-rich conditions by binding to the active Rag GTPases to inhibit mTORC1 localization to the lysosome and phosphorylation of downstream targets. This facilitates constitutive basal autophagy during nutrient availability. This is WD repeat domain-containing protein 83 (Wdr83) from Mus musculus (Mouse).